The sequence spans 367 residues: Glutamate 5-kinase (367 aa).

An ATP-binding site is contributed by K10. Substrate is bound by residues S50, D137, and N149. ATP is bound by residues 169 to 170 (TD) and 211 to 217 (TGGMSTK). Residues 275–353 (AGEITVDDGA…QQIAEILGYE (79 aa)) enclose the PUA domain.

The protein belongs to the glutamate 5-kinase family.

It localises to the cytoplasm. It carries out the reaction L-glutamate + ATP = L-glutamyl 5-phosphate + ADP. The protein operates within amino-acid biosynthesis; L-proline biosynthesis; L-glutamate 5-semialdehyde from L-glutamate: step 1/2. Catalyzes the transfer of a phosphate group to glutamate to form L-glutamate 5-phosphate. The chain is Glutamate 5-kinase from Pectobacterium atrosepticum (strain SCRI 1043 / ATCC BAA-672) (Erwinia carotovora subsp. atroseptica).